We begin with the raw amino-acid sequence, 194 residues long: NAD(P)H-quinone oxidoreductase subunit I (194 aa).

2 4Fe-4S ferredoxin-type domains span residues 55 to 84 (GRIH…VDWE) and 95 to 124 (NHYS…MTEE). Positions 64, 67, 70, 74, 104, 107, 110, and 114 each coordinate [4Fe-4S] cluster. A disordered region spans residues 173-194 (DLPAGSRRAGLRPEEIVEQSQQ).

This sequence belongs to the complex I 23 kDa subunit family. In terms of assembly, NDH-1 is composed of at least 11 different subunits. [4Fe-4S] cluster serves as cofactor.

The protein localises to the cellular thylakoid membrane. It carries out the reaction a plastoquinone + NADH + (n+1) H(+)(in) = a plastoquinol + NAD(+) + n H(+)(out). The catalysed reaction is a plastoquinone + NADPH + (n+1) H(+)(in) = a plastoquinol + NADP(+) + n H(+)(out). Its function is as follows. NDH-1 shuttles electrons from an unknown electron donor, via FMN and iron-sulfur (Fe-S) centers, to quinones in the respiratory and/or the photosynthetic chain. The immediate electron acceptor for the enzyme in this species is believed to be plastoquinone. Couples the redox reaction to proton translocation, and thus conserves the redox energy in a proton gradient. The sequence is that of NAD(P)H-quinone oxidoreductase subunit I (ndhI) from Leptolyngbya boryana (Plectonema boryanum).